Consider the following 569-residue polypeptide: Aspartic proteinase 3 (569 aa).

A signal peptide spans 1-21 (MKLKTVRSAVLSSLFASQVLG). Positions 22 to 67 (KIIPAANKRDDDSNSKFVKLPFHKLYGDSLENVGSDKKPEVRLLKR) are excised as a propeptide. The Peptidase A1 domain occupies 83 to 475 (YSVDLEVGTP…DLENLEISMA (393 aa)). Asparagine 95 carries N-linked (GlcNAc...) asparagine glycosylation. The active site involves aspartate 101. Asparagine 203, asparagine 232, asparagine 242, asparagine 245, asparagine 299, and asparagine 358 each carry an N-linked (GlcNAc...) asparagine glycan. Aspartate 371 is a catalytic residue. Asparagine 480, asparagine 522, and asparagine 532 each carry an N-linked (GlcNAc...) asparagine glycan. Residue asparagine 548 is the site of GPI-anchor amidated asparagine attachment. A propeptide spans 549–569 (VGDHIVPSLPLTLISLLFAFI) (removed in mature form).

It belongs to the peptidase A1 family. Consists of an alpha and a beta subunit, which are maintained together by a disulfide bond. Post-translationally, the zymogen is transported to the periplasm, where the propeptide is removed and the enzyme is further subjected to an internal, autocatalytic cleavage to generate an alpha/beta two-subunit endopeptidase. The proteolytic processing at the cell surface is regulated by the environmental pH. In terms of processing, extensively N-glycosylated.

It is found in the cell membrane. The catalysed reaction is Hydrolyzes various precursor proteins with Arg or Lys in P1, and commonly Arg or Lys also in P2. The P3 amino acid is usually non-polar, but otherwise additional basic amino acids are favorable in both non-prime and prime positions.. Cleaves proteins C-terminally to mono- and paired-basic residues. Involved in the shedding of a subset of GPI-anchored plasma membrane proteins from the cell surface, including itself, GAS1 and MSB2. May also play a role in the maturation of GPI-mannoproteins associated with the cell wall. Can process the alpha-mating factor precursor. Required for cell wall integrity. The protein is Aspartic proteinase 3 (YPS1) of Saccharomyces cerevisiae (strain ATCC 204508 / S288c) (Baker's yeast).